The primary structure comprises 323 residues: tRNA U34 carboxymethyltransferase (323 aa).

Residues Lys-91, Trp-105, Lys-110, Gly-130, 152 to 154 (DPT), 181 to 182 (IE), Met-196, Tyr-200, and Arg-315 each bind carboxy-S-adenosyl-L-methionine.

This sequence belongs to the class I-like SAM-binding methyltransferase superfamily. CmoB family. Homotetramer.

It catalyses the reaction carboxy-S-adenosyl-L-methionine + 5-hydroxyuridine(34) in tRNA = 5-carboxymethoxyuridine(34) in tRNA + S-adenosyl-L-homocysteine + H(+). Its function is as follows. Catalyzes carboxymethyl transfer from carboxy-S-adenosyl-L-methionine (Cx-SAM) to 5-hydroxyuridine (ho5U) to form 5-carboxymethoxyuridine (cmo5U) at position 34 in tRNAs. In Escherichia coli O6:H1 (strain CFT073 / ATCC 700928 / UPEC), this protein is tRNA U34 carboxymethyltransferase.